Here is a 259-residue protein sequence, read N- to C-terminus: Beta-glucanase (259 aa).

The signal sequence occupies residues 1–31; sequence MVKSKYLVFISVFSLLFGVFVVGFSHQGVKA. The region spanning 35–255 is the GH16 domain; it reads RPMGTAFYES…WVRYTPLQNY (221 aa). Residue Glu-142 is the Nucleophile of the active site. Residue Glu-146 is the Proton donor of the active site.

This sequence belongs to the glycosyl hydrolase 16 family.

It catalyses the reaction Hydrolysis of (1-&gt;4)-beta-D-glucosidic linkages in beta-D-glucans containing (1-&gt;3)- and (1-&gt;4)-bonds.. In terms of biological role, hydrolyzes B-glucans containing mixed beta-1,3 and beta-1,4 linkages. The protein is Beta-glucanase (bglBB) of Brevibacillus brevis (Bacillus brevis).